A 130-amino-acid polypeptide reads, in one-letter code: Small ribosomal subunit protein uS8 (130 aa).

This sequence belongs to the universal ribosomal protein uS8 family. In terms of assembly, part of the 30S ribosomal subunit. Contacts proteins S5 and S12.

In terms of biological role, one of the primary rRNA binding proteins, it binds directly to 16S rRNA central domain where it helps coordinate assembly of the platform of the 30S subunit. The polypeptide is Small ribosomal subunit protein uS8 (Tolumonas auensis (strain DSM 9187 / NBRC 110442 / TA 4)).